Consider the following 368-residue polypeptide: 1-deoxy-D-xylulose 5-phosphate reductoisomerase (368 aa).

Residues Thr10, Gly11, Ser12, Ile13, Gln38, and Asn100 each contribute to the NADPH site. Residue Lys101 participates in 1-deoxy-D-xylulose 5-phosphate binding. An NADPH-binding site is contributed by Glu102. Mn(2+) is bound at residue Asp125. Residues Ser126, Glu127, Ser151, and His172 each coordinate 1-deoxy-D-xylulose 5-phosphate. A Mn(2+)-binding site is contributed by Glu127. Gly178 contributes to the NADPH binding site. The 1-deoxy-D-xylulose 5-phosphate site is built by Ser185, Asn190, Lys191, and Glu194. Residue Glu194 participates in Mn(2+) binding.

The protein belongs to the DXR family. It depends on Mg(2+) as a cofactor. Mn(2+) is required as a cofactor.

The catalysed reaction is 2-C-methyl-D-erythritol 4-phosphate + NADP(+) = 1-deoxy-D-xylulose 5-phosphate + NADPH + H(+). Its pathway is isoprenoid biosynthesis; isopentenyl diphosphate biosynthesis via DXP pathway; isopentenyl diphosphate from 1-deoxy-D-xylulose 5-phosphate: step 1/6. Its function is as follows. Catalyzes the NADPH-dependent rearrangement and reduction of 1-deoxy-D-xylulose-5-phosphate (DXP) to 2-C-methyl-D-erythritol 4-phosphate (MEP). The chain is 1-deoxy-D-xylulose 5-phosphate reductoisomerase from Tropheryma whipplei (strain Twist) (Whipple's bacillus).